We begin with the raw amino-acid sequence, 1194 residues long: Phosphatidylinositol-3,5-bisphosphate 3-phosphatase MTMR3 (1194 aa).

At Ser4 the chain carries Phosphoserine. Positions 151 to 572 (EHVTSRFKNE…RNLMLWSAVY (422 aa)) constitute a Myotubularin phosphatase domain. Positions 322, 347, and 348 each coordinate a 1,2-diacyl-sn-glycero-3-phospho-(1D-myo-inositol-3,5-bisphosphate). 3 residues coordinate a 1,2-diacyl-sn-glycero-3-phospho-(1D-myo-inositol-3-phosphate): Asn322, Asn347, and Ile348. Catalysis depends on Cys409, which acts as the Phosphocysteine intermediate. Residues Ser410, Asp411, Gly412, Trp413, Asp414, Arg415, Lys451, and Arg455 each coordinate a 1,2-diacyl-sn-glycero-3-phospho-(1D-myo-inositol-3,5-bisphosphate). A 1,2-diacyl-sn-glycero-3-phospho-(1D-myo-inositol-3-phosphate)-binding residues include Ser410, Asp411, Gly412, Trp413, Asp414, and Arg415. Arg455 provides a ligand contact to a 1,2-diacyl-sn-glycero-3-phospho-(1D-myo-inositol-3-phosphate). Residues 583–609 (DDSCAPYPAPGTSPDEPPLSRLPKTRS) are disordered. Pro residues predominate over residues 589–599 (YPAPGTSPDEP). 4 positions are modified to phosphoserine: Ser609, Ser629, Ser643, and Ser647. Positions 693–724 (TKEESGVEEPTHREHTEVPEVKEEAPLAKESR) are enriched in basic and acidic residues. Disordered stretches follow at residues 693–731 (TKEE…QGSG), 852–871 (ESGP…RFSG), and 876–897 (PIAP…HRTS). Thr725 bears the Phosphothreonine mark. The residue at position 904 (Ser904) is a Phosphoserine. Disordered stretches follow at residues 932–971 (NKAS…HQLS) and 988–1017 (KWLN…DGMP). The segment covering 991–1006 (NSHSGRPSTTNSPEQP) has biased composition (polar residues). The stretch at 1025-1058 (QRLRQIESGHQQEVETLKKQVQELKSRLESQYLT) forms a coiled coil. Position 1060 is a phosphoserine (Ser1060). An FYVE-type zinc finger spans residues 1115–1175 (DHLAAHCYAC…VCKSCYSSLH (61 aa)). Cys1121, Cys1124, Cys1137, Cys1140, Cys1145, Cys1148, Cys1167, and Cys1170 together coordinate Zn(2+).

This sequence belongs to the protein-tyrosine phosphatase family. Non-receptor class myotubularin subfamily. In terms of assembly, forms heterodimers with MTMR4 that recruit both CEP55 and PLK1; occurs during early mitosis, regulates the phosphorylation of CEP55 by PLK1 and its recruitment to the midbody where it mediates cell abscission.

The protein resides in the cytoplasm. It localises to the cytosol. Its subcellular location is the membrane. It carries out the reaction a 1,2-diacyl-sn-glycero-3-phospho-(1D-myo-inositol-3,5-bisphosphate) + H2O = a 1,2-diacyl-sn-glycero-3-phospho-(1D-myo-inositol-5-phosphate) + phosphate. The enzyme catalyses a 1,2-diacyl-sn-glycero-3-phospho-(1D-myo-inositol-3-phosphate) + H2O = a 1,2-diacyl-sn-glycero-3-phospho-(1D-myo-inositol) + phosphate. The catalysed reaction is 1,2-dihexadecanoyl-sn-glycero-3-phospho-(1D-myo-inositol-3-phosphate) + H2O = 1,2-dihexadecanoyl-sn-glycero-3-phospho-(1D-myo-inositol) + phosphate. It catalyses the reaction 1,2-dioctanoyl-sn-glycero-3-phospho-(1-D-myo-inositol-3-phosphate) + H2O = 1,2-dioctanoyl-sn-glycero-3-phospho-(1D-myo-inositol) + phosphate. It carries out the reaction 1,2-dihexadecanoyl-sn-glycero-3-phospho-(1D-myo-inositol-3,5-phosphate) + H2O = 1,2-dihexadecanoyl-sn-glycero-3-phospho-(1D-myo-inositol-5-phosphate) + phosphate. Its function is as follows. Lipid phosphatase that specifically dephosphorylates the D-3 position of phosphatidylinositol 3-phosphate and phosphatidylinositol 3,5-bisphosphate, generating phosphatidylinositol and phosphatidylinositol 5-phosphate. Decreases the levels of phosphatidylinositol 3-phosphate, a phospholipid found in cell membranes where it acts as key regulator of both cell signaling and intracellular membrane traffic. Could also have a molecular sequestering/adapter activity and regulate biological processes independently of its phosphatase activity. It includes the regulation of midbody abscission during mitotic cytokinesis. The chain is Phosphatidylinositol-3,5-bisphosphate 3-phosphatase MTMR3 from Rattus norvegicus (Rat).